Consider the following 245-residue polypeptide: Enolase-phosphatase E1 (245 aa).

The Mg(2+) site is built by Asp14 and Glu16. Residues 141–142 (SS) and Lys175 contribute to the substrate site. Asp200 contributes to the Mg(2+) binding site.

This sequence belongs to the HAD-like hydrolase superfamily. MasA/MtnC family. As to quaternary structure, monomer. Mg(2+) serves as cofactor.

It localises to the cytoplasm. The protein localises to the nucleus. It catalyses the reaction 5-methylsulfanyl-2,3-dioxopentyl phosphate + H2O = 1,2-dihydroxy-5-(methylsulfanyl)pent-1-en-3-one + phosphate. It participates in amino-acid biosynthesis; L-methionine biosynthesis via salvage pathway; L-methionine from S-methyl-5-thio-alpha-D-ribose 1-phosphate: step 3/6. Its pathway is amino-acid biosynthesis; L-methionine biosynthesis via salvage pathway; L-methionine from S-methyl-5-thio-alpha-D-ribose 1-phosphate: step 4/6. Its function is as follows. Bifunctional enzyme that catalyzes the enolization of 2,3-diketo-5-methylthiopentyl-1-phosphate (DK-MTP-1-P) into the intermediate 2-hydroxy-3-keto-5-methylthiopentenyl-1-phosphate (HK-MTPenyl-1-P), which is then dephosphorylated to form the acireductone 1,2-dihydroxy-3-keto-5-methylthiopentene (DHK-MTPene). The protein is Enolase-phosphatase E1 of Drosophila grimshawi (Hawaiian fruit fly).